A 290-amino-acid polypeptide reads, in one-letter code: Succinate dehydrogenase [ubiquinone] iron-sulfur subunit, mitochondrial (290 aa).

The N-terminal 38 residues, 1–38, are a transit peptide targeting the mitochondrion; it reads MAAAVVGVSLRRGVPARFLRAGLRPVRGLEAVHGICRG. The 2Fe-2S ferredoxin-type domain maps to 50-143; sequence KKFSIYRWDP…TTKIYPLPHM (94 aa). C103, C108, C111, and C123 together coordinate [2Fe-2S] cluster. Positions 186-216 constitute a 4Fe-4S ferredoxin-type domain; sequence DRQKLDGLYECILCACCSTSCPSYWWNGDKY. The [4Fe-4S] cluster site is built by C196, C199, and C202. Position 206 (C206) interacts with [3Fe-4S] cluster. W211 serves as a coordination point for a ubiquinone. The [3Fe-4S] cluster site is built by C253 and C259. Residue C263 coordinates [4Fe-4S] cluster.

Belongs to the succinate dehydrogenase/fumarate reductase iron-sulfur protein family. As to quaternary structure, component of complex II composed of four subunits: the flavoprotein (FP) SDHA, iron-sulfur protein (IP) SDHB, and a cytochrome b560 composed of SDHC and SDHD. Requires [2Fe-2S] cluster as cofactor. [3Fe-4S] cluster is required as a cofactor. The cofactor is [4Fe-4S] cluster.

Its subcellular location is the mitochondrion inner membrane. The enzyme catalyses a quinone + succinate = fumarate + a quinol. It catalyses the reaction (R)-malate + a quinone = enol-oxaloacetate + a quinol. The catalysed reaction is (S)-malate + a quinone = enol-oxaloacetate + a quinol. Its pathway is carbohydrate metabolism; tricarboxylic acid cycle; fumarate from succinate (eukaryal route): step 1/1. Its activity is regulated as follows. Enol-oxaloacetate inhibits the succinate dehydrogenase activity. Iron-sulfur protein (IP) subunit of the succinate dehydrogenase complex (mitochondrial respiratory chain complex II), responsible for transferring electrons from succinate to ubiquinone (coenzyme Q). SDH also oxidizes malate to the non-canonical enol form of oxaloacetate, enol-oxaloacetate. Enol-oxaloacetate, which is a potent inhibitor of the succinate dehydrogenase activity, is further isomerized into keto-oxaloacetate. This Gallus gallus (Chicken) protein is Succinate dehydrogenase [ubiquinone] iron-sulfur subunit, mitochondrial (SDHB).